We begin with the raw amino-acid sequence, 142 residues long: Metallothiol transferase FosB (142 aa).

The VOC domain occupies 5–120; sequence NVNHICFSVS…DGHKIELHTG (116 aa). Positions 8, 67, and 116 each coordinate Mg(2+). Glu116 functions as the Proton donor/acceptor in the catalytic mechanism.

This sequence belongs to the fosfomycin resistance protein family. FosB subfamily. In terms of assembly, homodimer. It depends on Mg(2+) as a cofactor.

Its subcellular location is the cytoplasm. In terms of biological role, metallothiol transferase which confers resistance to fosfomycin by catalyzing the addition of a thiol cofactor to fosfomycin. L-cysteine is probably the physiological thiol donor. This is Metallothiol transferase FosB from Staphylococcus epidermidis (strain ATCC 35984 / DSM 28319 / BCRC 17069 / CCUG 31568 / BM 3577 / RP62A).